A 316-amino-acid chain; its full sequence is C1GALT1-specific chaperone 1 (316 aa).

At 1-6 (MLSESS) the chain is on the cytoplasmic side. Residues 7 to 26 (SFLKGVMLGSIFCALITMLG) form a helical; Signal-anchor for type II membrane protein membrane-spanning segment. At 27–316 (HIRIGNRMHH…FLPPNGSEND (290 aa)) the chain is on the lumenal side.

Belongs to the glycosyltransferase 31 family. Beta3-Gal-T subfamily. Associates with core 1 beta-3-galactosyltransferase (C1GALT1), probably not with the soluble active form.

It is found in the membrane. Functionally, probable chaperone required for the generation of 1 O-glycan Gal-beta1-3GalNAc-alpha1-Ser/Thr (T antigen), which is a precursor for many extended O-glycans in glycoproteins. Probably acts as a specific molecular chaperone assisting the folding/stability of core 1 beta-3-galactosyltransferase (C1GALT1). The polypeptide is C1GALT1-specific chaperone 1 (C1galt1c1) (Mus musculus (Mouse)).